Consider the following 141-residue polypeptide: Large ribosomal subunit protein uL11 (141 aa).

This sequence belongs to the universal ribosomal protein uL11 family. As to quaternary structure, part of the ribosomal stalk of the 50S ribosomal subunit. Interacts with L10 and the large rRNA to form the base of the stalk. L10 forms an elongated spine to which L12 dimers bind in a sequential fashion forming a multimeric L10(L12)X complex. In terms of processing, one or more lysine residues are methylated.

Functionally, forms part of the ribosomal stalk which helps the ribosome interact with GTP-bound translation factors. The protein is Large ribosomal subunit protein uL11 of Geobacillus sp. (strain WCH70).